The following is a 330-amino-acid chain: Clavaminate synthase-like protein At3g21360 (330 aa).

Ala-2 carries the N-acetylalanine modification. 3 residues coordinate Fe cation: His-120, Glu-122, and His-313.

It depends on Fe cation as a cofactor.

The sequence is that of Clavaminate synthase-like protein At3g21360 from Arabidopsis thaliana (Mouse-ear cress).